Reading from the N-terminus, the 582-residue chain is Probable inorganic phosphate transporter 1-9 (582 aa).

Topologically, residues 1–23 are cytoplasmic; the sequence is MAPRIRVLAALDQARTQYYHFKA. The helical transmembrane segment at 24–44 threads the bilayer; that stretch reads IVIAGMGLFTDSYDLFCISPV. Residues 45 to 75 are Extracellular-facing; sequence MKIFGRVYYAPSGSVDGSGSGPGVTPPAVVS. Residues 76-96 traverse the membrane as a helical segment; sequence ATVGVALLGAVAGNVVFGALG. At 97–103 the chain is on the cytoplasmic side; it reads DRVGRRR. The chain crosses the membrane as a helical span at residues 104–124; that stretch reads VYGACLLLMVCSSVGSGLSVC. At 125-130 the chain is on the extracellular side; that stretch reads RTRRCA. The chain crosses the membrane as a helical span at residues 131-151; the sequence is LASLCFFRFLLGVGVGGDYPL. At 152–165 the chain is on the cytoplasmic side; the sequence is SATIMSEFANRRTR. Residues 166 to 186 form a helical membrane-spanning segment; sequence GAFIAAVFSMQGFGILVSSAV. Topologically, residues 187-210 are extracellular; sequence TMAVAAAFDHYTGYPAPLDTPECA. Residues 211 to 231 form a helical membrane-spanning segment; that stretch reads DLAWRIILMAGAVPAALTYYW. The Cytoplasmic segment spans residues 232 to 307; sequence RMSMPETARY…RRFVRQHGRD (76 aa). Residues 308–328 form a helical membrane-spanning segment; it reads LFACAAAWFLLDIPYYSSTLF. Residues 329 to 354 are Extracellular-facing; the sequence is QSQIYRPWFPPAAKVNAFQEAFNVAK. A helical transmembrane segment spans residues 355-375; the sequence is FQAVIAVASTIPGYFAAMLLI. Over 376–385 the chain is Cytoplasmic; the sequence is ERAGRRRLQM. A helical transmembrane segment spans residues 386–406; that stretch reads AGFLLMAVFLFALAGPYDGYW. The Extracellular portion of the chain corresponds to 407-415; sequence RDHAKTAGY. A helical transmembrane segment spans residues 416 to 436; sequence IVLYSLTFFSANLGPNTTTFI. At 437-451 the chain is on the cytoplasmic side; that stretch reads LPAELFPARFRSTCH. A helical transmembrane segment spans residues 452–472; it reads GLSGAAGKLGALVGSIGFLWA. The Extracellular segment spans residues 473–485; the sequence is SQQKDGAAAGHLP. Residues 486 to 506 traverse the membrane as a helical segment; it reads GIGMMYALFVLGGICLLGLAL. At 507-582 the chain is on the cytoplasmic side; the sequence is TYAFTPETMT…SPILPHRMSL (76 aa). A disordered region spans residues 519–541; that stretch reads LEENESSVQAQSQVGDGGSDAGN.

It belongs to the major facilitator superfamily. Phosphate:H(+) symporter (TC 2.A.1.9) family. As to expression, expressed at low levels in roots.

The protein localises to the membrane. In terms of biological role, high-affinity transporter for external inorganic phosphate. In Oryza sativa subsp. japonica (Rice), this protein is Probable inorganic phosphate transporter 1-9 (PHT1-9).